Reading from the N-terminus, the 424-residue chain is Enolase (424 aa).

Q162 serves as a coordination point for (2R)-2-phosphoglycerate. The active-site Proton donor is E204. D241, E284, and D311 together coordinate Mg(2+). Residues K336, R365, S366, and K387 each coordinate (2R)-2-phosphoglycerate. The active-site Proton acceptor is the K336.

This sequence belongs to the enolase family. Requires Mg(2+) as cofactor.

It is found in the cytoplasm. The protein localises to the secreted. Its subcellular location is the cell surface. It carries out the reaction (2R)-2-phosphoglycerate = phosphoenolpyruvate + H2O. It participates in carbohydrate degradation; glycolysis; pyruvate from D-glyceraldehyde 3-phosphate: step 4/5. Catalyzes the reversible conversion of 2-phosphoglycerate (2-PG) into phosphoenolpyruvate (PEP). It is essential for the degradation of carbohydrates via glycolysis. In Rhizobium johnstonii (strain DSM 114642 / LMG 32736 / 3841) (Rhizobium leguminosarum bv. viciae), this protein is Enolase.